A 389-amino-acid chain; its full sequence is Dual-specificity RNA methyltransferase RlmN (389 aa).

Catalysis depends on E110, which acts as the Proton acceptor. The region spanning 116 to 355 (EKDRATLCVS…TIVRKTRGDD (240 aa)) is the Radical SAM core domain. A disulfide bridge connects residues C123 and C360. Residues C130, C134, and C137 each coordinate [4Fe-4S] cluster. Residues 184 to 185 (GE), S216, 238 to 240 (SLH), and N317 each bind S-adenosyl-L-methionine. C360 acts as the S-methylcysteine intermediate in catalysis.

It belongs to the radical SAM superfamily. RlmN family. Requires [4Fe-4S] cluster as cofactor.

It localises to the cytoplasm. It catalyses the reaction adenosine(2503) in 23S rRNA + 2 reduced [2Fe-2S]-[ferredoxin] + 2 S-adenosyl-L-methionine = 2-methyladenosine(2503) in 23S rRNA + 5'-deoxyadenosine + L-methionine + 2 oxidized [2Fe-2S]-[ferredoxin] + S-adenosyl-L-homocysteine. The catalysed reaction is adenosine(37) in tRNA + 2 reduced [2Fe-2S]-[ferredoxin] + 2 S-adenosyl-L-methionine = 2-methyladenosine(37) in tRNA + 5'-deoxyadenosine + L-methionine + 2 oxidized [2Fe-2S]-[ferredoxin] + S-adenosyl-L-homocysteine. Specifically methylates position 2 of adenine 2503 in 23S rRNA and position 2 of adenine 37 in tRNAs. m2A2503 modification seems to play a crucial role in the proofreading step occurring at the peptidyl transferase center and thus would serve to optimize ribosomal fidelity. In Erwinia tasmaniensis (strain DSM 17950 / CFBP 7177 / CIP 109463 / NCPPB 4357 / Et1/99), this protein is Dual-specificity RNA methyltransferase RlmN.